A 264-amino-acid polypeptide reads, in one-letter code: MRQQEVHDFLLRFFQANSCQIVDQGLGYMTVQLTVEMDKQIMNRPFYWHWREKTGGDPNPMKITFITDKENAPKDLDGEFIYFGAPRLFQIFKAVKQNGRFTRMYEKIESAGAKVPLQPWLGINVTISYQSDMKKDKLLSLGLHLVSGTIIEDFQSKLTQFSLTSQICDYCFTISPMIKPESGLKRMENYISKSAMQEPSDWAEQAVNRWKNDMTLLDKFYEHIEEKPEEYHLEKQALKTLYQPKISVEIENGGLFYLQNNISS.

This is an uncharacterized protein from Bacillus subtilis (strain 168).